Reading from the N-terminus, the 61-residue chain is Cytotoxin 3 (61 aa).

Disulfide bonds link C3–C22, C15–C39, C43–C54, and C55–C60.

It belongs to the three-finger toxin family. Short-chain subfamily. Type IB cytotoxin sub-subfamily. Expressed by the venom gland.

It localises to the secreted. Its function is as follows. This protein lyses red blood cells and has cardiotoxic and hypotensive activities. The chain is Cytotoxin 3 from Hemachatus haemachatus (Rinkhals).